The primary structure comprises 119 residues: UPF0342 protein GK0640 (119 aa).

Belongs to the UPF0342 family.

The protein is UPF0342 protein GK0640 of Geobacillus kaustophilus (strain HTA426).